The sequence spans 219 residues: 7-cyano-7-deazaguanine synthase (219 aa).

Residue 11–21 participates in ATP binding; that stretch reads FSGGQDSTTCL. Zn(2+)-binding residues include C188, C196, C199, and C202.

Belongs to the QueC family. Zn(2+) serves as cofactor.

It catalyses the reaction 7-carboxy-7-deazaguanine + NH4(+) + ATP = 7-cyano-7-deazaguanine + ADP + phosphate + H2O + H(+). The protein operates within purine metabolism; 7-cyano-7-deazaguanine biosynthesis. Functionally, catalyzes the ATP-dependent conversion of 7-carboxy-7-deazaguanine (CDG) to 7-cyano-7-deazaguanine (preQ(0)). The sequence is that of 7-cyano-7-deazaguanine synthase from Glaesserella parasuis serovar 5 (strain SH0165) (Haemophilus parasuis).